Consider the following 269-residue polypeptide: uncharacterized protein (269 aa).

The stretch at 3-66 (VDQAAIDEIL…QNLQNLAEGA (64 aa)) forms a coiled coil. A disordered region spans residues 83–142 (AQIPEPPKPEPEVEQPETETGPEPEPEAEPELKEVKEDEPPEEDVVRELDESKSAEPIPE). Positions 94–111 (EVEQPETETGPEPEPEAE) are enriched in acidic residues. A compositionally biased stretch (basic and acidic residues) spans 112–136 (PELKEVKEDEPPEEDVVRELDESKS).

This is an uncharacterized protein from Archaeoglobus fulgidus (strain ATCC 49558 / DSM 4304 / JCM 9628 / NBRC 100126 / VC-16).